Consider the following 361-residue polypeptide: Peptide chain release factor 1 (361 aa).

Gln-237 carries the N5-methylglutamine modification. Residues 283–296 (VEDEKRRSEEESTR) show a composition bias toward basic and acidic residues. The tract at residues 283-305 (VEDEKRRSEEESTRRNLVSSGDR) is disordered.

Belongs to the prokaryotic/mitochondrial release factor family. Methylated by PrmC. Methylation increases the termination efficiency of RF1.

It is found in the cytoplasm. Peptide chain release factor 1 directs the termination of translation in response to the peptide chain termination codons UAG and UAA. The protein is Peptide chain release factor 1 of Shewanella woodyi (strain ATCC 51908 / MS32).